A 424-amino-acid chain; its full sequence is Protein shisa-9 (424 aa).

Residues 1–23 (MRRVLRLLLGCFLTELCARVCRA) form the signal peptide. Residues 24–149 (QERAGHGQLA…DPLHDPTKDK (126 aa)) lie on the Extracellular side of the membrane. Asn-45, Asn-89, and Asn-116 each carry an N-linked (GlcNAc...) asparagine glycan. The helical transmembrane segment at 150–170 (TNLIVYIICGVVAVMVLVGIF) threads the bilayer. At 171-424 (TKLGLEKAHR…ITNSKTEVTV (254 aa)) the chain is on the cytoplasmic side. A disordered region spans residues 333–424 (PRAFSPEHGP…ITNSKTEVTV (92 aa)). Polar residues predominate over residues 414–424 (FITNSKTEVTV).

This sequence belongs to the shisa family. SHISA9 subfamily. In terms of assembly, component of some AMPA receptors (ionotropic glutamate receptors) complex, at least composed of some AMPA receptor (GRIA1, GRIA2 and/or GRIA3), CACNG2 and SHISA9, as well as low level of DLG4.

The protein resides in the cell projection. Its subcellular location is the dendritic spine membrane. The protein localises to the synapse. Regulator of short-term neuronal synaptic plasticity in the dentate gyrus. Associates with AMPA receptors (ionotropic glutamate receptors) in synaptic spines and promotes AMPA receptor desensitization at excitatory synapses. This Homo sapiens (Human) protein is Protein shisa-9 (SHISA9).